The sequence spans 126 residues: Protein ApaG (126 aa).

Residues S2–H126 enclose the ApaG domain.

This is Protein ApaG from Pseudomonas putida (strain ATCC 700007 / DSM 6899 / JCM 31910 / BCRC 17059 / LMG 24140 / F1).